A 329-amino-acid polypeptide reads, in one-letter code: Glycerol-3-phosphate dehydrogenase [NAD(P)+] (329 aa).

Residues serine 13, tryptophan 14, histidine 34, and lysine 105 each contribute to the NADPH site. 3 residues coordinate sn-glycerol 3-phosphate: lysine 105, glycine 134, and serine 136. Residue alanine 138 coordinates NADPH. Positions 189, 242, 252, 253, and 254 each coordinate sn-glycerol 3-phosphate. Lysine 189 functions as the Proton acceptor in the catalytic mechanism. Arginine 253 contributes to the NADPH binding site. NADPH-binding residues include valine 277 and glutamate 279.

It belongs to the NAD-dependent glycerol-3-phosphate dehydrogenase family.

The protein localises to the cytoplasm. It catalyses the reaction sn-glycerol 3-phosphate + NAD(+) = dihydroxyacetone phosphate + NADH + H(+). The enzyme catalyses sn-glycerol 3-phosphate + NADP(+) = dihydroxyacetone phosphate + NADPH + H(+). The protein operates within membrane lipid metabolism; glycerophospholipid metabolism. Functionally, catalyzes the reduction of the glycolytic intermediate dihydroxyacetone phosphate (DHAP) to sn-glycerol 3-phosphate (G3P), the key precursor for phospholipid synthesis. This is Glycerol-3-phosphate dehydrogenase [NAD(P)+] from Legionella pneumophila (strain Corby).